We begin with the raw amino-acid sequence, 63 residues long: Synergistic-type venom protein C9S3, chain 2 (63 aa).

3 disulfide bridges follow: cysteine 3-cysteine 24, cysteine 17-cysteine 42, and cysteine 46-cysteine 57.

This sequence belongs to the three-finger toxin family. Short-chain subfamily. Aminergic toxin sub-subfamily. Heterodimer of C9S3 chain 1 (AC P01408) and chain 2, linked by at least two disulfide bonds. As to expression, expressed by the venom gland.

Its subcellular location is the secreted. In terms of biological role, this protein shows a synergetic toxic effect in that it enhances the toxicity of other D.angusticeps toxins. This is Synergistic-type venom protein C9S3, chain 2 from Dendroaspis angusticeps (Eastern green mamba).